Here is a 193-residue protein sequence, read N- to C-terminus: Large ribosomal subunit protein uL18 (193 aa).

This sequence belongs to the universal ribosomal protein uL18 family. Part of the 50S ribosomal subunit. Contacts the 5S and 23S rRNAs.

This is one of the proteins that bind and probably mediate the attachment of the 5S RNA into the large ribosomal subunit, where it forms part of the central protuberance. This chain is Large ribosomal subunit protein uL18, found in Methanosphaera stadtmanae (strain ATCC 43021 / DSM 3091 / JCM 11832 / MCB-3).